The chain runs to 469 residues: Tetratricopeptide repeat protein 38 (469 aa).

TPR repeat units lie at residues 107–140 (REKL…HPTD), 179–212 (SYVK…ERTD), and 251–284 (CHVY…QCFA).

Belongs to the TTC38 family.

The sequence is that of Tetratricopeptide repeat protein 38 (ttc38) from Xenopus laevis (African clawed frog).